We begin with the raw amino-acid sequence, 466 residues long: Ras-GEF domain-containing family member 1C (466 aa).

The disordered stretch occupies residues 1–37; that stretch reads MPQTLSASDMVTPGSLSPPPTEPTDGEQAGQPLLDGA. The region spanning 34–164 is the N-terminal Ras-GEF domain; the sequence is LDGAPSSASL…LLQALHQKLA (131 aa). Residues 200-446 enclose the Ras-GEF domain; the sequence is DPYTLAQQLT…YLASYESESP (247 aa).

In terms of biological role, guanine nucleotide exchange factor (GEF). This chain is Ras-GEF domain-containing family member 1C (RASGEF1C), found in Homo sapiens (Human).